The chain runs to 228 residues: L-ribulose-5-phosphate 4-epimerase UlaF (228 aa).

Substrate contacts are provided by residues 26 to 27 (GN), 43 to 44 (SG), and 72 to 73 (SS). The Zn(2+) site is built by Asp-74, His-93, and His-95. The Proton donor/acceptor role is filled by Asp-118. His-167 lines the Zn(2+) pocket. The Proton donor/acceptor role is filled by Tyr-225.

It belongs to the aldolase class II family. AraD/FucA subfamily. Zn(2+) serves as cofactor.

It catalyses the reaction L-ribulose 5-phosphate = D-xylulose 5-phosphate. It functions in the pathway cofactor degradation; L-ascorbate degradation; D-xylulose 5-phosphate from L-ascorbate: step 4/4. Functionally, catalyzes the isomerization of L-ribulose 5-phosphate to D-xylulose 5-phosphate. Is involved in the anaerobic L-ascorbate utilization. The polypeptide is L-ribulose-5-phosphate 4-epimerase UlaF (Shigella boydii serotype 18 (strain CDC 3083-94 / BS512)).